The following is a 301-amino-acid chain: Small ribosomal subunit biogenesis GTPase RsgA (301 aa).

Positions 65–224 (YNQLIRPKVA…LVDTPGFGNL (160 aa)) constitute a CP-type G domain. Residues 115 to 118 (SKYD) and 167 to 175 (GNSGVGKST) each bind GTP. Zn(2+) contacts are provided by Cys-247, Cys-252, His-254, and Cys-260.

The protein belongs to the TRAFAC class YlqF/YawG GTPase family. RsgA subfamily. Monomer. Associates with 30S ribosomal subunit, binds 16S rRNA. The cofactor is Zn(2+).

It localises to the cytoplasm. Its function is as follows. One of several proteins that assist in the late maturation steps of the functional core of the 30S ribosomal subunit. Helps release RbfA from mature subunits. May play a role in the assembly of ribosomal proteins into the subunit. Circularly permuted GTPase that catalyzes slow GTP hydrolysis, GTPase activity is stimulated by the 30S ribosomal subunit. This Ureaplasma urealyticum serovar 10 (strain ATCC 33699 / Western) protein is Small ribosomal subunit biogenesis GTPase RsgA.